The following is a 204-amino-acid chain: Large ribosomal subunit protein uL4 (204 aa).

The segment at 48 to 75 (HTKGRSDVSGGGKKPWRQKGRGGARAGS) is disordered.

The protein belongs to the universal ribosomal protein uL4 family. In terms of assembly, part of the 50S ribosomal subunit.

In terms of biological role, one of the primary rRNA binding proteins, this protein initially binds near the 5'-end of the 23S rRNA. It is important during the early stages of 50S assembly. It makes multiple contacts with different domains of the 23S rRNA in the assembled 50S subunit and ribosome. Forms part of the polypeptide exit tunnel. This is Large ribosomal subunit protein uL4 from Campylobacter fetus subsp. fetus (strain 82-40).